An 850-amino-acid chain; its full sequence is Protein monoglycylase TTLL8 (850 aa).

Disordered stretches follow at residues 1-29 (MEPE…QGIS) and 228-254 (RSSR…DAEN). Positions 222–580 (SHQSCSRSSR…DRSCDIGNFE (359 aa)) constitute a TTL domain. ATP-binding positions include lysine 354, 360-361 (RG), 392-395 (QKYI), 405-407 (KFD), and 449-450 (CN). Residue arginine 360 participates in a protein binding. The Mg(2+) site is built by aspartate 527, glutamate 540, and asparagine 542. An ATP-binding site is contributed by glutamate 540. Positions 627-652 (AQPLKARGPSAMPDPAQGPPSPALQR) are disordered.

Mg(2+) is required as a cofactor.

Its subcellular location is the cytoplasm. The protein resides in the cytoskeleton. It localises to the cell projection. The protein localises to the cilium. It is found in the cilium axoneme. Its subcellular location is the flagellum axoneme. The enzyme catalyses L-glutamyl-[protein] + glycine + ATP = glycyl-L-glutamyl-[protein] + ADP + phosphate + H(+). Functionally, monoglycylase which modifies both tubulin and non-tubulin proteins, adding a single glycine to the gamma-carboxyl groups of specific glutamate residues to generate monoglycine side chains within the C-terminal tail of target proteins. Not involved in elongation step of the polyglycylation reaction. Preferentially monoglycylates alpha-tubulin over beta-tubulin. Together with TTLL3, mediates microtubule glycylation of primary and motile cilia, which is essential for their stability and maintenance. Together with TTLL3, glycylates sperm flagella which regulates axonemal dynein motor activity, thereby controlling flagellar beat, directional sperm swimming and male fertility. Monoglycylates non-tubulin proteins such as ANP32A, ANP32B, SET, NCL and NAP1. This Homo sapiens (Human) protein is Protein monoglycylase TTLL8.